The following is a 428-amino-acid chain: 3-phosphoshikimate 1-carboxyvinyltransferase (428 aa).

3-phosphoshikimate is bound by residues Lys-20, Ser-21, and Arg-25. A phosphoenolpyruvate-binding site is contributed by Lys-20. Phosphoenolpyruvate is bound by residues Gly-92 and Arg-120. 3-phosphoshikimate contacts are provided by Ser-166, Gln-168, Asp-314, and Lys-341. Gln-168 is a phosphoenolpyruvate binding site. The active-site Proton acceptor is the Asp-314. Residues Arg-345 and Arg-387 each contribute to the phosphoenolpyruvate site.

It belongs to the EPSP synthase family. As to quaternary structure, monomer.

The protein resides in the cytoplasm. The enzyme catalyses 3-phosphoshikimate + phosphoenolpyruvate = 5-O-(1-carboxyvinyl)-3-phosphoshikimate + phosphate. It participates in metabolic intermediate biosynthesis; chorismate biosynthesis; chorismate from D-erythrose 4-phosphate and phosphoenolpyruvate: step 6/7. In terms of biological role, catalyzes the transfer of the enolpyruvyl moiety of phosphoenolpyruvate (PEP) to the 5-hydroxyl of shikimate-3-phosphate (S3P) to produce enolpyruvyl shikimate-3-phosphate and inorganic phosphate. This Listeria monocytogenes serotype 4a (strain HCC23) protein is 3-phosphoshikimate 1-carboxyvinyltransferase.